Consider the following 815-residue polypeptide: Protein pygopus (815 aa).

Disordered stretches follow at residues 1–107 (MTHN…QVSA) and 147–711 (GMGG…GPMG). A Nuclear localization signal motif is present at residues 39–45 (PKKRRKT). A compositionally biased stretch (low complexity) spans 46 to 73 (SSAANSAAAVAAAAAAAAAANSMQQQQA). The span at 74–86 (PPTPQDLLPPPPM) shows a compositional bias: pro residues. Positions 188–199 (RGMSPMHPHQMG) are enriched in low complexity. Gly residues-rich tracts occupy residues 230 to 248 (PMGG…GMGG) and 257 to 269 (GMGG…GGPN). The segment covering 307 to 316 (LGPPSGPGPG) has biased composition (pro residues). 4 stretches are compositionally biased toward low complexity: residues 323–341 (GPQQ…NGQM), 407–424 (SNNN…NQNP), 444–478 (PSVS…VPTS), and 495–545 (GPSP…HQQH). Pro residues predominate over residues 569 to 580 (PQQPSHLGPPHP). The span at 602–621 (GGPGMHGGPAGMPPHMGGGP) shows a compositional bias: gly residues. Low complexity predominate over residues 622-636 (NPHMMGGPHGNAGPH). Positions 640–656 (GHMGGVPGPGPGPGGMN) are enriched in gly residues. The segment covering 663-675 (MSPHHGHPHHHHN) has biased composition (basic residues). Gly residues predominate over residues 678-711 (GGPGPNMFGGGGGGPMGPGGPMGNMGPMGGGPMG). The PHD-type zinc finger occupies 747–805 (IYPCGMCHKEVNDNDEAVFCESGCNFFFHRTCVGLTEAAFQMLNKEVFAEWCCDKCVSS).

Binds to BCL9 via the PHD-type zinc finger motif, and thereby becomes part of the nuclear ARM/PAN complex. As to expression, ubiquitous throughout embryogenesis and larval development.

It is found in the nucleus. Functionally, involved in signal transduction through the Wnt pathway. This Drosophila melanogaster (Fruit fly) protein is Protein pygopus (pygo).